The primary structure comprises 1105 residues: ATP-dependent DNA helicase MPH1 (1105 aa).

In terms of domain architecture, Helicase ATP-binding spans 94–261 (IVQRAFYDNL…EIIDNLSISK (168 aa)). 107–114 (LPTGLGKT) serves as a coordination point for ATP. The DEAH box motif lies at 209-212 (DEAH). In terms of domain architecture, Helicase C-terminal spans 468–641 (SIERIGSNLR…LITLAQSNRI (174 aa)). Disordered stretches follow at residues 493 to 534 (EEAY…AQIK), 684 to 708 (KGKKVTKSKSKSKSNSKSKKIEKRF), 758 to 824 (IQSK…PKLG), 850 to 880 (LVTGKSTSPPENVAEKRNSPILNSSNRECAP), and 918 to 953 (VSDDEKSVEDSINNQQLHKNKNLGSTSDDDDAFDEG). The segment covering 499–511 (KGKKGRTKGKATK) has biased composition (basic residues). The segment covering 518-532 (TPERSTSRTSSEDAQ) has biased composition (basic and acidic residues). The segment covering 684–705 (KGKKVTKSKSKSKSNSKSKKIE) has biased composition (basic residues). Basic and acidic residues predominate over residues 764 to 787 (PVKENQSKRPNSEHICEEDSRQET). A compositionally biased stretch (low complexity) spans 788 to 799 (ENNSNESNGSFE). The segment covering 927–943 (DSINNQQLHKNKNLGST) has biased composition (polar residues). Positions 944 to 953 (SDDDDAFDEG) are enriched in acidic residues.

Belongs to the DEAD box helicase family. DEAH subfamily. FANCM sub-subfamily. Interacts with the MHF histone-fold complex to form the FANCM-MHF complex.

The protein resides in the nucleus. It carries out the reaction ATP + H2O = ADP + phosphate + H(+). ATP-dependent DNA helicase involved in DNA damage repair by homologous recombination and in genome maintenance. Capable of unwinding D-loops. Plays a role in limiting crossover recombinants during mitotic DNA double-strand break (DSB) repair. Component of a FANCM-MHF complex which promotes gene conversion at blocked replication forks, probably by reversal of the stalled fork. This chain is ATP-dependent DNA helicase MPH1, found in Debaryomyces hansenii (strain ATCC 36239 / CBS 767 / BCRC 21394 / JCM 1990 / NBRC 0083 / IGC 2968) (Yeast).